The sequence spans 377 residues: Alanine racemase (377 aa).

Lys-33 acts as the Proton acceptor; specific for D-alanine in catalysis. At Lys-33 the chain carries N6-(pyridoxal phosphate)lysine. Arg-134 is a substrate binding site. The active-site Proton acceptor; specific for L-alanine is the Tyr-267. Substrate is bound at residue Met-315.

Belongs to the alanine racemase family. Requires pyridoxal 5'-phosphate as cofactor.

It catalyses the reaction L-alanine = D-alanine. It participates in amino-acid biosynthesis; D-alanine biosynthesis; D-alanine from L-alanine: step 1/1. Its function is as follows. Catalyzes the interconversion of L-alanine and D-alanine. May also act on other amino acids. In Treponema pallidum subsp. pallidum (strain SS14), this protein is Alanine racemase (alr).